We begin with the raw amino-acid sequence, 465 residues long: Pancreatic triacylglycerol lipase (465 aa).

The N-terminal stretch at 1-16 (MLLVWSLALLLGAVAG) is a signal peptide. 2 disulfide bridges follow: cysteine 20-cysteine 26 and cysteine 107-cysteine 118. Serine 169 serves as the catalytic Nucleophile. Catalysis depends on aspartate 193, which acts as the Charge relay system. Residues glutamate 204, arginine 207, aspartate 209, and aspartate 212 each coordinate Ca(2+). The cysteines at positions 254 and 278 are disulfide-linked. The Charge relay system role is filled by histidine 280. 3 cysteine pairs are disulfide-bonded: cysteine 302–cysteine 313, cysteine 316–cysteine 321, and cysteine 449–cysteine 465. Residues 355-465 (WRYKVSVTLS…EDVLLTLNAC (111 aa)) form the PLAT domain.

It belongs to the AB hydrolase superfamily. Lipase family. As to quaternary structure, forms a 1:1 stoichiometric complex with (pro)colipase/CLPS. In terms of tissue distribution, expressed in many tissues with highest expression in liver. During hibernation there is a significant increases in expression in heart, white adipose tissue (WAT), and testis; but not in pancreas.

The protein localises to the secreted. It carries out the reaction a triacylglycerol + H2O = a diacylglycerol + a fatty acid + H(+). The catalysed reaction is 1,2,3-tributanoylglycerol + H2O = dibutanoylglycerol + butanoate + H(+). The enzyme catalyses 1,2,3-tri-(9Z-octadecenoyl)-glycerol + H2O = di-(9Z)-octadecenoylglycerol + (9Z)-octadecenoate + H(+). It catalyses the reaction all-trans-retinyl hexadecanoate + H2O = all-trans-retinol + hexadecanoate + H(+). It carries out the reaction 1,2-di-(9Z-octadecenoyl)-glycerol + H2O = (9Z-octadecenoyl)-glycerol + (9Z)-octadecenoate + H(+). Inhibited by bile salts, is reactivated by (pro)colipase/CLPS. Its function is as follows. Plays an important role in fat metabolism. It preferentially splits the esters of long-chain fatty acids at positions 1 and 3, producing mainly 2-monoacylglycerol and free fatty acids, and shows considerably higher activity against insoluble emulsified substrates than against soluble ones. Plays a role in hibernation as a key enzyme that shows high activity at low temperatures. When expressed in the hibernating heart it liberates fatty acids from triglycerides at temperatures as low as 0 degrees Celsius. The sequence is that of Pancreatic triacylglycerol lipase (PNLIP) from Ictidomys tridecemlineatus (Thirteen-lined ground squirrel).